Here is a 353-residue protein sequence, read N- to C-terminus: MDFKIAVLAGDGIGPEISVQGVEVMSAVCEKFGHKVNYEYAICGADAIDKVGDPFPEETYRVCKNADAVLFSAVGDPKFDNDPTAKVRPEQGLLAMRKKLGLFANIRPVQTFKCLVHKSPLRAELVEGADFLCIRELTGGMYFGEKYQDNDKAYDTNMYTRPEIERILKVGFEYAMKRRKHLTVVDKANVLASSRLWRQIAQEMAPQYPEVTTDYMFVDNAAMKMIQEPKFFDVMVTENTFGDILTDEGSVISGSMGLLPSASTGESTPVFEPIHGSWPQAKGLNIANPLAQILSVAMLFEYFDCKAEGALIRKAVDASLDANVRTPEIQVEGGEKFGTKEVGAWIVDYIRKA.

Substrate contacts are provided by arginine 97, arginine 107, arginine 135, and aspartate 219. Mg(2+)-binding residues include aspartate 219, aspartate 243, and aspartate 247.

Belongs to the isocitrate and isopropylmalate dehydrogenases family. LeuB type 1 subfamily. Homodimer. It depends on Mg(2+) as a cofactor. Mn(2+) serves as cofactor.

The protein localises to the cytoplasm. It carries out the reaction (2R,3S)-3-isopropylmalate + NAD(+) = 4-methyl-2-oxopentanoate + CO2 + NADH. The protein operates within amino-acid biosynthesis; L-leucine biosynthesis; L-leucine from 3-methyl-2-oxobutanoate: step 3/4. Its function is as follows. Catalyzes the oxidation of 3-carboxy-2-hydroxy-4-methylpentanoate (3-isopropylmalate) to 3-carboxy-4-methyl-2-oxopentanoate. The product decarboxylates to 4-methyl-2 oxopentanoate. This Bacteroides fragilis (strain ATCC 25285 / DSM 2151 / CCUG 4856 / JCM 11019 / LMG 10263 / NCTC 9343 / Onslow / VPI 2553 / EN-2) protein is 3-isopropylmalate dehydrogenase.